The following is a 284-amino-acid chain: Lipoyl synthase (284 aa).

[4Fe-4S] cluster-binding residues include cysteine 34, cysteine 39, cysteine 45, cysteine 60, cysteine 64, cysteine 67, and serine 272. Positions 46–261 (FARRTATFMI…EEIGYKLGFK (216 aa)) constitute a Radical SAM core domain.

The protein belongs to the radical SAM superfamily. Lipoyl synthase family. [4Fe-4S] cluster is required as a cofactor.

Its subcellular location is the cytoplasm. The enzyme catalyses [[Fe-S] cluster scaffold protein carrying a second [4Fe-4S](2+) cluster] + N(6)-octanoyl-L-lysyl-[protein] + 2 oxidized [2Fe-2S]-[ferredoxin] + 2 S-adenosyl-L-methionine + 4 H(+) = [[Fe-S] cluster scaffold protein] + N(6)-[(R)-dihydrolipoyl]-L-lysyl-[protein] + 4 Fe(3+) + 2 hydrogen sulfide + 2 5'-deoxyadenosine + 2 L-methionine + 2 reduced [2Fe-2S]-[ferredoxin]. Its pathway is protein modification; protein lipoylation via endogenous pathway; protein N(6)-(lipoyl)lysine from octanoyl-[acyl-carrier-protein]: step 2/2. Its function is as follows. Catalyzes the radical-mediated insertion of two sulfur atoms into the C-6 and C-8 positions of the octanoyl moiety bound to the lipoyl domains of lipoate-dependent enzymes, thereby converting the octanoylated domains into lipoylated derivatives. This is Lipoyl synthase from Caldanaerobacter subterraneus subsp. tengcongensis (strain DSM 15242 / JCM 11007 / NBRC 100824 / MB4) (Thermoanaerobacter tengcongensis).